Here is a 193-residue protein sequence, read N- to C-terminus: Acyl carrier protein phosphodiesterase (193 aa).

The protein belongs to the AcpH family.

It catalyses the reaction holo-[ACP] + H2O = apo-[ACP] + (R)-4'-phosphopantetheine + H(+). Functionally, converts holo-ACP to apo-ACP by hydrolytic cleavage of the phosphopantetheine prosthetic group from ACP. The polypeptide is Acyl carrier protein phosphodiesterase (Escherichia coli O6:H1 (strain CFT073 / ATCC 700928 / UPEC)).